The chain runs to 149 residues: Arginine repressor (149 aa).

This sequence belongs to the ArgR family.

The protein resides in the cytoplasm. It participates in amino-acid biosynthesis; L-arginine biosynthesis [regulation]. Functionally, regulates arginine biosynthesis genes. The protein is Arginine repressor of Geobacillus kaustophilus (strain HTA426).